Reading from the N-terminus, the 925-residue chain is MEDRGICPRVLQVLFLVVLILISPVYAAKNDACTKCSCNPKGMVSCFELQEFPPLATFPRNTTTLHVSFSGEISIPSDILQHLEKLKYLTLNNNKIKNIAKFRVKNGYSSLITLSYTHNIIETIENGAFDDLQQLTQLDLSNNRLKEFPIFNKTSSVTKLYLRGNPGITKLPRQSLGNLPSLENLFMERTGIQEIPAGIFRQNTRLINLYFNKTKALERINEDAFDEDSSLKTLVLDETSVTSLPSRGLKNLHFLSLKDVPNFWQLPELDSIREVYLSPYNGFLCCEFESGEKYGKDCTMQKPSTEENNGQTTASSPTKEPATSGLGGGTHLSTQPHTTSGFGGGGFPGGGGGFPGGGGFPAGGSKTSTQPHTTSGFGGGGFPGGGGGFPGGGGFPAGGSKTSTQPHTTSGFGGGGFPGGGGGFPGGGGFPGGSNTSTQPHTTSNSGGGGFPGGGGFPGGGTPFTNQFTIPHIPNVHQSTADPPTLIPHSNHTPNGTQFHQCSKIPVQCVPKSDAFHPCEDIMGYVWLTVVSFMVGAVALVANLVVALVLLTSQRRLNVTRFLMCNLAFADFILGLYIFILTSVSAVTRGDYHNYVQQWQNGAGCKILGFLAVFSSELSLFTLVMMTIERFYAIVHAMHMNARLSFRKTVRFMIGGWIFALVMAVVPLTGVSGYSKVAICLPFDVSDATSTAYVAFLLLVNGASFISVMYLYSRMLYVVVSGGDMEGAPKRNDSKVAKRMAILVFTDMLCWAPIAFFGLLAAFGQTLLTVTQSKILLVFFFPINSICNPFLYAFFTKAFKRELFTALSRIGFCKFRALKYNGTLSSFLYSRSRRHHSTVNAEHSTPKSKHASTMSLRQSHQDLYRKESKTAESLNGICNAGFNAHEETRTSPGSVRYVRSLRGVTKSSSPPHLKLQKQKILQSPS.

Positions 1–27 (MEDRGICPRVLQVLFLVVLILISPVYA) are cleaved as a signal peptide. Residues 28-529 (AKNDACTKCS…EDIMGYVWLT (502 aa)) are Extracellular-facing. The N-linked (GlcNAc...) asparagine glycan is linked to asparagine 61. LRR repeat units lie at residues 85–106 (KLKY…RVKN), 110–131 (SLIT…AFDD), 134–155 (QLTQ…NKTS), 156–180 (SVTK…GNLP), 181–202 (SLEN…IFRQ), 203–224 (NTRL…NEDA), 230–250 (SLKT…RGLK), and 251–273 (NLHF…DSIR). Asparagine 152 carries N-linked (GlcNAc...) asparagine glycosylation. A glycan (N-linked (GlcNAc...) asparagine) is linked at asparagine 212. The segment at 299–493 (TMQKPSTEEN…PTLIPHSNHT (195 aa)) is disordered. A compositionally biased stretch (polar residues) spans 301–318 (QKPSTEENNGQTTASSPT). One copy of the 1; truncated repeat lies at 333 to 349 (STQPHTTSGFGGGGFPG). The interval 333-461 (STQPHTTSGF…PGGGGFPGGG (129 aa)) is 5 X approximate tandem repeats. A compositionally biased stretch (gly residues) spans 341–362 (GFGGGGFPGGGGGFPGGGGFPA). 3 repeat units span residues 350 to 384 (GGGG…GFPG), 385 to 419 (GGGG…GFPG), and 420 to 453 (GGGG…GFPG). A compositionally biased stretch (polar residues) spans 365-375 (SKTSTQPHTTS). The segment covering 376–397 (GFGGGGFPGGGGGFPGGGGFPA) has biased composition (gly residues). Residues 400 to 410 (SKTSTQPHTTS) are compositionally biased toward polar residues. Over residues 411–432 (GFGGGGFPGGGGGFPGGGGFPG) the composition is skewed to gly residues. Positions 434–445 (SNTSTQPHTTSN) are enriched in polar residues. The N-linked (GlcNAc...) asparagine glycan is linked to asparagine 435. Gly residues predominate over residues 446 to 462 (SGGGGFPGGGGFPGGGT). The stretch at 454–461 (GGGFPGGG) is one 5; truncated repeat. Polar residues predominate over residues 476 to 493 (VHQSTADPPTLIPHSNHT). The N-linked (GlcNAc...) asparagine glycan is linked to asparagine 495. A helical membrane pass occupies residues 530–551 (VVSFMVGAVALVANLVVALVLL). Over 552–561 (TSQRRLNVTR) the chain is Cytoplasmic. Residues 562-584 (FLMCNLAFADFILGLYIFILTSV) form a helical membrane-spanning segment. Over 585–606 (SAVTRGDYHNYVQQWQNGAGCK) the chain is Extracellular. Residues 607–628 (ILGFLAVFSSELSLFTLVMMTI) form a helical membrane-spanning segment. Topologically, residues 629–651 (ERFYAIVHAMHMNARLSFRKTVR) are cytoplasmic. A helical membrane pass occupies residues 652 to 673 (FMIGGWIFALVMAVVPLTGVSG). Residues 674–691 (YSKVAICLPFDVSDATST) are Extracellular-facing. The helical transmembrane segment at 692 to 712 (AYVAFLLLVNGASFISVMYLY) threads the bilayer. The Cytoplasmic segment spans residues 713–739 (SRMLYVVVSGGDMEGAPKRNDSKVAKR). A helical membrane pass occupies residues 740–763 (MAILVFTDMLCWAPIAFFGLLAAF). Topologically, residues 764–774 (GQTLLTVTQSK) are extracellular. A helical membrane pass occupies residues 775 to 795 (ILLVFFFPINSICNPFLYAFF). Residues 796–925 (TKAFKRELFT…QKQKILQSPS (130 aa)) lie on the Cytoplasmic side of the membrane. The disordered stretch occupies residues 904–925 (VTKSSSPPHLKLQKQKILQSPS).

It belongs to the G-protein coupled receptor 1 family. FSH/LSH/TSH subfamily.

It is found in the cell membrane. In terms of biological role, probable receptor for a glycoprotein hormone. This Anthopleura elegantissima (Green aggregating anemone) protein is Probable glycoprotein hormone G-protein coupled receptor.